The sequence spans 142 residues: MKTFSAKAHEVTREWYVIDATDKVLGRVASEVAHRLRGKHKPEFTPHVDTGDFIIVINAGKLRVTGNKATDKKYYRHSGYPGGIYETTFGKMQERFPGRALEKAVKGMLPKGPLGYAMIKKLKVYAEATHPHSAQQPKALEI.

Belongs to the universal ribosomal protein uL13 family. In terms of assembly, part of the 50S ribosomal subunit.

This protein is one of the early assembly proteins of the 50S ribosomal subunit, although it is not seen to bind rRNA by itself. It is important during the early stages of 50S assembly. The polypeptide is Large ribosomal subunit protein uL13 (Paraburkholderia phytofirmans (strain DSM 17436 / LMG 22146 / PsJN) (Burkholderia phytofirmans)).